The following is a 932-amino-acid chain: Calpain-like protease palB/cpr-8 (932 aa).

The Calpain catalytic domain maps to 96–419; sequence KLHGNIFPPW…FDSLYVNWSP (324 aa). Active-site residues include Cys178, His346, and Asn366. Residues 890 to 932 are disordered; it reads QGHVTEGSDDDGGGGGGGGGGVHVEISSDGVVSIGEWEVADED. Residues 902–911 are compositionally biased toward gly residues; that stretch reads GGGGGGGGGV.

Belongs to the peptidase C2 family. PalB/RIM13 subfamily.

Functionally, required for the proteolytic cleavage of the transcription factor pacc-1 in response to alkaline ambient pH. The protein is Calpain-like protease palB/cpr-8 (cpr-8) of Neurospora crassa (strain ATCC 24698 / 74-OR23-1A / CBS 708.71 / DSM 1257 / FGSC 987).